Reading from the N-terminus, the 127-residue chain is Fluoride-specific ion channel FluC (127 aa).

The next 4 helical transmembrane spans lie at 7–27 (VYVA…VAWV), 38–58 (GTLA…VYVV), 70–90 (LIMV…LEAW), and 102–122 (LAYI…GIAL). The Na(+) site is built by glycine 77 and threonine 80.

It belongs to the fluoride channel Fluc/FEX (TC 1.A.43) family.

The protein resides in the cell inner membrane. The catalysed reaction is fluoride(in) = fluoride(out). Na(+) is not transported, but it plays an essential structural role and its presence is essential for fluoride channel function. In terms of biological role, fluoride-specific ion channel. Important for reducing fluoride concentration in the cell, thus reducing its toxicity. This is Fluoride-specific ion channel FluC from Hahella chejuensis (strain KCTC 2396).